A 432-amino-acid polypeptide reads, in one-letter code: Homogentisate 1,2-dioxygenase (432 aa).

The active-site Proton acceptor is H287. Fe cation contacts are provided by H330 and E336. Positions 345 and 366 each coordinate homogentisate. H366 serves as a coordination point for Fe cation.

The protein belongs to the homogentisate dioxygenase family. Hexamer; dimer of trimers. Fe cation is required as a cofactor.

It carries out the reaction homogentisate + O2 = 4-maleylacetoacetate + H(+). The protein operates within amino-acid degradation; L-phenylalanine degradation; acetoacetate and fumarate from L-phenylalanine: step 4/6. Functionally, involved in the catabolism of homogentisate (2,5-dihydroxyphenylacetate or 2,5-OH-PhAc), a central intermediate in the degradation of phenylalanine and tyrosine. Catalyzes the oxidative ring cleavage of the aromatic ring of homogentisate to yield maleylacetoacetate. The sequence is that of Homogentisate 1,2-dioxygenase from Pseudomonas aeruginosa (strain ATCC 15692 / DSM 22644 / CIP 104116 / JCM 14847 / LMG 12228 / 1C / PRS 101 / PAO1).